A 152-amino-acid chain; its full sequence is UPF0266 membrane protein YobD (152 aa).

A run of 3 helical transmembrane segments spans residues 6-26 (LVLI…QFIM), 45-65 (VDSV…VTSH), and 67-87 (AQMT…IFWI).

It belongs to the UPF0266 family.

The protein localises to the cell inner membrane. The chain is UPF0266 membrane protein YobD from Salmonella choleraesuis (strain SC-B67).